The primary structure comprises 234 residues: Ribonuclease 3 (234 aa).

In terms of domain architecture, RNase III spans 4–133 (LLDLEHKLNY…ILGAVYIDSN (130 aa)). Glutamate 46 is a binding site for Mg(2+). Aspartate 50 is a catalytic residue. Mg(2+)-binding residues include aspartate 119 and glutamate 122. The active site involves glutamate 122. The 69-residue stretch at 160-228 (DFKSILQEYV…AKALCIKLGV (69 aa)) folds into the DRBM domain.

It belongs to the ribonuclease III family. As to quaternary structure, homodimer. The cofactor is Mg(2+).

The protein resides in the cytoplasm. It catalyses the reaction Endonucleolytic cleavage to 5'-phosphomonoester.. In terms of biological role, digests double-stranded RNA. Involved in the processing of primary rRNA transcript to yield the immediate precursors to the large and small rRNAs (23S and 16S). Processes some mRNAs, and tRNAs when they are encoded in the rRNA operon. Processes pre-crRNA and tracrRNA of type II CRISPR loci if present in the organism. In Fusobacterium nucleatum subsp. nucleatum (strain ATCC 25586 / DSM 15643 / BCRC 10681 / CIP 101130 / JCM 8532 / KCTC 2640 / LMG 13131 / VPI 4355), this protein is Ribonuclease 3.